Consider the following 220-residue polypeptide: Ribosomal RNA large subunit methyltransferase E (220 aa).

S-adenosyl-L-methionine contacts are provided by Gly-60, Trp-62, Asp-92, Asp-108, and Asp-133. The active-site Proton acceptor is the Lys-173.

This sequence belongs to the class I-like SAM-binding methyltransferase superfamily. RNA methyltransferase RlmE family.

It localises to the cytoplasm. The catalysed reaction is uridine(2552) in 23S rRNA + S-adenosyl-L-methionine = 2'-O-methyluridine(2552) in 23S rRNA + S-adenosyl-L-homocysteine + H(+). Specifically methylates the uridine in position 2552 of 23S rRNA at the 2'-O position of the ribose in the fully assembled 50S ribosomal subunit. This chain is Ribosomal RNA large subunit methyltransferase E, found in Paraburkholderia xenovorans (strain LB400).